Reading from the N-terminus, the 368-residue chain is F-box only protein 28 (368 aa).

Positions 1–11 (MAAAAEERMAE) are enriched in basic and acidic residues. Residues 1-56 (MAAAAEERMAEEGGGGQGDGGSSLASGSTQRQPPPPAPQHPQPGSQALPAPALAPD) are disordered. The segment covering 12–21 (EGGGGQGDGG) has biased composition (gly residues). A compositionally biased stretch (low complexity) spans 22 to 31 (SSLASGSTQR). Residues 32–41 (QPPPPAPQHP) are compositionally biased toward pro residues. Residues 42-56 (QPGSQALPAPALAPD) show a composition bias toward low complexity. Residues 61–109 (NNTLVALPIVAIENILSFMSYDEISQLRLVCKRMDLVCQRMLNQGFLKV) enclose the F-box domain. A phosphoserine mark is found at Ser-235 and Ser-242. Phosphothreonine is present on Thr-270. The disordered stretch occupies residues 328–368 (MESAVGNSSGSGQNEESPRKRKKATEAIDSLRKSKRLRNRK). Residues 333–342 (GNSSGSGQNE) show a composition bias toward low complexity. A Phosphoserine modification is found at Ser-344.

Part of a SCF (SKP1-cullin-F-box) protein ligase complex.

The protein localises to the chromosome. The protein resides in the centromere. Its subcellular location is the kinetochore. Its function is as follows. Probably recognizes and binds to some phosphorylated proteins and promotes their ubiquitination and degradation. The sequence is that of F-box only protein 28 (FBXO28) from Homo sapiens (Human).